A 156-amino-acid polypeptide reads, in one-letter code: Small ribosomal subunit protein uS7 (156 aa).

It belongs to the universal ribosomal protein uS7 family. In terms of assembly, part of the 30S ribosomal subunit. Contacts proteins S9 and S11.

One of the primary rRNA binding proteins, it binds directly to 16S rRNA where it nucleates assembly of the head domain of the 30S subunit. Is located at the subunit interface close to the decoding center, probably blocks exit of the E-site tRNA. In Rhizobium etli (strain ATCC 51251 / DSM 11541 / JCM 21823 / NBRC 15573 / CFN 42), this protein is Small ribosomal subunit protein uS7.